Here is a 322-residue protein sequence, read N- to C-terminus: Protein SEC13 homolog (322 aa).

V2 bears the N-acetylvaline mark. 6 WD repeats span residues 11–50 (SHED…QILI), 55–96 (GHEG…WEKS), 101–144 (GHDS…EVKK), 148–204 (AHTI…QWKE), 210–253 (AHSD…SNTW), and 260–299 (KFND…QWVC). Residue S184 is modified to Phosphoserine. S309 is modified (phosphoserine).

This sequence belongs to the WD repeat SEC13 family. At the nuclear pore: component of the Y-shaped Nup107-160 subcomplex of the nuclear pore complex (NPC). The Nup107-160 subcomplex includes NUP160, NUP133, NUP107, NUP98, NUP85, NUP43, NUP37, SEH1 and SEC13. At the COPII coat complex: interacts with SEC31A and SEC31B. Interacts with SEC16A. Interacts with SEC16B. Component of the GATOR2 subcomplex, composed of MIOS, SEC13, SEH1L, WDR24 and WDR59. The GATOR2 complex interacts with CASTOR1 and CASTOR2; the interaction is negatively regulated by arginine. The GATOR2 complex interacts with SESN1, SESN2 and SESN3; the interaction is negatively regulated by amino acids.

The protein resides in the cytoplasmic vesicle. It is found in the COPII-coated vesicle membrane. It localises to the endoplasmic reticulum membrane. Its subcellular location is the nucleus. The protein localises to the nuclear pore complex. The protein resides in the lysosome membrane. The GATOR2 complex is negatively regulated by the upstream amino acid sensors CASTOR1 and SESN2, which sequester the GATOR2 complex in absence of amino acids. In the presence of abundant amino acids, GATOR2 is released from CASTOR1 and SESN2 and activated. Functionally, functions as a component of the nuclear pore complex (NPC) and the COPII coat. At the endoplasmic reticulum, SEC13 is involved in the biogenesis of COPII-coated vesicles. Required for the exit of adipsin (CFD/ADN), an adipocyte-secreted protein from the endoplasmic reticulum. As a component of the GATOR2 complex, functions as an activator of the amino acid-sensing branch of the mTORC1 signaling pathway. The GATOR2 complex indirectly activates mTORC1 through the inhibition of the GATOR1 subcomplex. GATOR2 probably acts as an E3 ubiquitin-protein ligase toward GATOR1. In the presence of abundant amino acids, the GATOR2 complex mediates ubiquitination of the NPRL2 core component of the GATOR1 complex, leading to GATOR1 inactivation. In the absence of amino acids, GATOR2 is inhibited, activating the GATOR1 complex. Within the GATOR2 complex, SEC13 and SEH1L are required to stabilize the complex. The polypeptide is Protein SEC13 homolog (Homo sapiens (Human)).